The chain runs to 282 residues: D-alanine aminotransferase (282 aa).

Residue tyrosine 32 coordinates substrate. Arginine 51 contacts pyridoxal 5'-phosphate. Arginine 99 and histidine 101 together coordinate substrate. Residue lysine 146 is the Proton acceptor of the active site. Lysine 146 carries the N6-(pyridoxal phosphate)lysine modification. Glutamate 178 lines the pyridoxal 5'-phosphate pocket.

Belongs to the class-IV pyridoxal-phosphate-dependent aminotransferase family. In terms of assembly, homodimer. The cofactor is pyridoxal 5'-phosphate.

The catalysed reaction is D-alanine + 2-oxoglutarate = D-glutamate + pyruvate. Acts on the D-isomers of alanine, leucine, aspartate, glutamate, aminobutyrate, norvaline and asparagine. The enzyme transfers an amino group from a substrate D-amino acid to the pyridoxal phosphate cofactor to form pyridoxamine and an alpha-keto acid in the first half-reaction. The second half-reaction is the reverse of the first, transferring the amino group from the pyridoxamine to a second alpha-keto acid to form the product D-amino acid via a ping-pong mechanism. This is an important process in the formation of D-alanine and D-glutamate, which are essential bacterial cell wall components. This chain is D-alanine aminotransferase (dat), found in Staphylococcus aureus (strain MSSA476).